Consider the following 93-residue polypeptide: Large ribosomal subunit protein uL23cz/uL23cy (93 aa).

This sequence belongs to the universal ribosomal protein uL23 family. In terms of assembly, part of the 50S ribosomal subunit.

Its subcellular location is the plastid. The protein localises to the chloroplast. In terms of biological role, binds to 23S rRNA. This is Large ribosomal subunit protein uL23cz/uL23cy (rpl23-A) from Arabidopsis thaliana (Mouse-ear cress).